The primary structure comprises 723 residues: Zinc finger CCCH domain-containing protein 11A (723 aa).

3 C3H1-type zinc fingers span residues 2-29 (SKQG…HCEA), 31-57 (LGNE…HMEI), and 60-87 (KRSE…HTKG). Disordered regions lie at residues 142–208 (ENSE…KQDD), 223–256 (KKQK…EKEN), 404–428 (KRAE…KLEE), 450–526 (EKAL…VKSL), and 565–681 (VKPS…APLS). Over residues 160-175 (ADDDEDDDDQLSEEGE) the composition is skewed to acidic residues. The stretch at 376-411 (KTFSEALAERKQRRLEEEKQKLEEFLTEKRAEGERK) forms a coiled coil. The span at 511 to 522 (PSNQSAPNSKAQ) shows a compositional bias: polar residues. The span at 609–620 (KKAALTAAPALP) shows a compositional bias: low complexity. The span at 637–649 (LELQLGSQADSVE) shows a compositional bias: polar residues. Residues 650-672 (QSGDSSSASASSQSVAKAQQLSS) show a composition bias toward low complexity.

The protein localises to the nucleus speckle. In terms of biological role, through its association with TREX complex components, may participate in the export and post-transcriptional coordination of selected mRNA transcripts. Binds RNA. This chain is Zinc finger CCCH domain-containing protein 11A (ZC3H11A), found in Gallus gallus (Chicken).